The following is a 245-amino-acid chain: tRNA1(Val) (adenine(37)-N6)-methyltransferase (245 aa).

Belongs to the methyltransferase superfamily. tRNA (adenine-N(6)-)-methyltransferase family.

It is found in the cytoplasm. It carries out the reaction adenosine(37) in tRNA1(Val) + S-adenosyl-L-methionine = N(6)-methyladenosine(37) in tRNA1(Val) + S-adenosyl-L-homocysteine + H(+). Specifically methylates the adenine in position 37 of tRNA(1)(Val) (anticodon cmo5UAC). The polypeptide is tRNA1(Val) (adenine(37)-N6)-methyltransferase (Salmonella arizonae (strain ATCC BAA-731 / CDC346-86 / RSK2980)).